The sequence spans 334 residues: DNA-directed RNA polymerase subunit alpha (334 aa).

The interval 1 to 232 (MVREEIAVST…IDLFIPFLHA (232 aa)) is alpha N-terminal domain (alpha-NTD). Residues 268 to 334 (GIALKCIFID…ILQKHFTIDC (67 aa)) form an alpha C-terminal domain (alpha-CTD) region.

It belongs to the RNA polymerase alpha chain family. In terms of assembly, in plastids the minimal PEP RNA polymerase catalytic core is composed of four subunits: alpha, beta, beta', and beta''. When a (nuclear-encoded) sigma factor is associated with the core the holoenzyme is formed, which can initiate transcription.

It is found in the plastid. It localises to the chloroplast. The enzyme catalyses RNA(n) + a ribonucleoside 5'-triphosphate = RNA(n+1) + diphosphate. Functionally, DNA-dependent RNA polymerase catalyzes the transcription of DNA into RNA using the four ribonucleoside triphosphates as substrates. This is DNA-directed RNA polymerase subunit alpha from Chloranthus spicatus (Chulantree).